Here is a 495-residue protein sequence, read N- to C-terminus: MNKSRWQSRRRHGRRSHQQNPWFRLRDSEDRSDSRAAQPAHDSGHGDDESPSTSSGTAGTSSVPELPGFYFDPEKKRYFRLLPGHNNCNPLTKESIRQKEMESKRLRLLQEEDRRKKIARMGFNASSMLRKSQLGFLNVTNYCHLAHELRLSCMERKKVQIRSMDPSALASDRFNLILADTNSDRLFTVNDVKVGGSKYGIINLQSLKTPTLKVFMHENLYFTNRKVNSVCWASLNHLDSHILLCLMGLAETPGCATLLPASLFVNSHPGIDRPGMLCSFRIPGAWSCAWSLNIQANNCFSTGLSRRVLLTNVVTGHRQSFGTNSDVLAQQFALMAPLLFNGCRSGEIFAIDLRCGNQGKGWKATRLFHDSAVTSVRILQDEQYLMASDMAGKIKLWDLRTTKCVRQYEGHVNEYAYLPLHVHEEEGILVAVGQDCYTRIWSLHDARLLRTIPSPYPASKADIPSVAFSSRLGGSRGAPGLLMAVGQDLYCYSYS.

Residues 1–17 show a composition bias toward basic residues; that stretch reads MNKSRWQSRRRHGRRSH. A disordered region spans residues 1 to 66; the sequence is MNKSRWQSRR…TAGTSSVPEL (66 aa). Positions 24–34 are enriched in basic and acidic residues; that stretch reads RLRDSEDRSDS. A compositionally biased stretch (low complexity) spans 51 to 62; it reads PSTSSGTAGTSS. WD repeat units lie at residues 368–407 and 410–451; these read FHDSAVTSVRILQDEQYLMASDMAGKIKLWDLRTTKCVRQ and GHVN…LLRT.

In terms of assembly, interacts with DDB1 and CUL4A.

The protein operates within protein modification; protein ubiquitination. Its function is as follows. May function as a substrate receptor for CUL4-DDB1 E3 ubiquitin-protein ligase complex. The protein is DDB1- and CUL4-associated factor 4 (DCAF4) of Homo sapiens (Human).